A 432-amino-acid chain; its full sequence is Cysteine desulfurase, mitosomal (432 aa).

Pyridoxal 5'-phosphate is bound by residues 102–103 (AT), glutamine 212, and 232–234 (CAH). Residue lysine 235 is modified to N6-(pyridoxal phosphate)lysine. Threonine 272 contacts pyridoxal 5'-phosphate. Cysteine 357 serves as the catalytic Cysteine persulfide intermediate. Cysteine 357 contacts [2Fe-2S] cluster.

The protein belongs to the class-V pyridoxal-phosphate-dependent aminotransferase family. NifS/IscS subfamily. Pyridoxal 5'-phosphate serves as cofactor.

Its subcellular location is the mitosome. The catalysed reaction is (sulfur carrier)-H + L-cysteine = (sulfur carrier)-SH + L-alanine. Catalyzes the removal of elemental sulfur from cysteine to produce alanine. It supplies the inorganic sulfur for iron-sulfur (Fe-S) clusters in mitosomes. The chain is Cysteine desulfurase, mitosomal from Encephalitozoon cuniculi (strain GB-M1) (Microsporidian parasite).